Consider the following 191-residue polypeptide: Probable DNA-directed RNA polymerase subunit delta (191 aa).

The 70-residue stretch at 14–83 (LSMIEVARAI…GENKWGLRSW (70 aa)) folds into the HTH HARE-type domain. 2 stretches are compositionally biased toward acidic residues: residues 117–136 (GDED…DFTE) and 142–191 (EYDE…EEEV). The interval 117–191 (GDEDAIDYND…DEEEEEEEEV (75 aa)) is disordered.

This sequence belongs to the RpoE family. In terms of assembly, RNAP is composed of a core of 2 alpha, a beta and a beta' subunits. The core is associated with a delta subunit and one of several sigma factors.

Functionally, participates in both the initiation and recycling phases of transcription. In the presence of the delta subunit, RNAP displays an increased specificity of transcription, a decreased affinity for nucleic acids, and an increased efficiency of RNA synthesis because of enhanced recycling. The chain is Probable DNA-directed RNA polymerase subunit delta from Streptococcus agalactiae serotype Ia (strain ATCC 27591 / A909 / CDC SS700).